A 179-amino-acid polypeptide reads, in one-letter code: Large ribosomal subunit protein uL5 (179 aa).

This sequence belongs to the universal ribosomal protein uL5 family. As to quaternary structure, part of the 50S ribosomal subunit; part of the 5S rRNA/L5/L18/L25 subcomplex. Contacts the 5S rRNA and the P site tRNA. Forms a bridge to the 30S subunit in the 70S ribosome.

This is one of the proteins that bind and probably mediate the attachment of the 5S RNA into the large ribosomal subunit, where it forms part of the central protuberance. In the 70S ribosome it contacts protein S13 of the 30S subunit (bridge B1b), connecting the 2 subunits; this bridge is implicated in subunit movement. Contacts the P site tRNA; the 5S rRNA and some of its associated proteins might help stabilize positioning of ribosome-bound tRNAs. The chain is Large ribosomal subunit protein uL5 from Pseudomonas syringae pv. tomato (strain ATCC BAA-871 / DC3000).